The chain runs to 133 residues: Snaclec A9 (133 aa).

Intrachain disulfides connect Cys-4–Cys-15, Cys-32–Cys-131, and Cys-106–Cys-123. Positions 11–132 (YEGHCYKVFN…CGQPYRFTCE (122 aa)) constitute a C-type lectin domain.

Belongs to the snaclec family. In terms of assembly, heterodimer; disulfide-linked. Expressed by the venom gland.

The protein localises to the secreted. Its function is as follows. Interferes with one step of hemostasis (modulation of platelet aggregation, or coagulation cascade, for example). The chain is Snaclec A9 from Macrovipera lebetinus (Levantine viper).